Consider the following 112-residue polypeptide: UPF0060 membrane protein IL2332 (112 aa).

4 helical membrane passes run 10–30, 36–56, 64–84, and 90–110; these read LGLF…PYLW, SAWL…LLTL, VYAA…KAVE, and TYDA…AVGW.

This sequence belongs to the UPF0060 family.

The protein resides in the cell inner membrane. The protein is UPF0060 membrane protein IL2332 of Idiomarina loihiensis (strain ATCC BAA-735 / DSM 15497 / L2-TR).